Consider the following 282-residue polypeptide: NADPH-dependent 7-cyano-7-deazaguanine reductase (282 aa).

Ile-88 to Ser-90 serves as a coordination point for substrate. Residue Ser-90–Lys-91 participates in NADPH binding. Cys-190 (thioimide intermediate) is an active-site residue. The Proton donor role is filled by Asp-197. Residue His-229 to Glu-230 coordinates substrate. An NADPH-binding site is contributed by Arg-258–Gly-259.

It belongs to the GTP cyclohydrolase I family. QueF type 2 subfamily. As to quaternary structure, homodimer.

Its subcellular location is the cytoplasm. It carries out the reaction 7-aminomethyl-7-carbaguanine + 2 NADP(+) = 7-cyano-7-deazaguanine + 2 NADPH + 3 H(+). It participates in tRNA modification; tRNA-queuosine biosynthesis. Catalyzes the NADPH-dependent reduction of 7-cyano-7-deazaguanine (preQ0) to 7-aminomethyl-7-deazaguanine (preQ1). This Salmonella arizonae (strain ATCC BAA-731 / CDC346-86 / RSK2980) protein is NADPH-dependent 7-cyano-7-deazaguanine reductase.